A 103-amino-acid polypeptide reads, in one-letter code: Cystatin-A (103 aa).

N-acetylmethionine is present on Met-1. Residues 52–56 (QVVAG) carry the Secondary area of contact motif.

The protein belongs to the cystatin family.

It localises to the cytoplasm. Its function is as follows. This is an intracellular thiol proteinase inhibitor. In Rattus norvegicus (Rat), this protein is Cystatin-A (Csta).